We begin with the raw amino-acid sequence, 153 residues long: Insulin-like growth factor 1 (153 aa).

Residues 49–77 (GPETLCGAELVDALQFVCGDRGFYFNKPT) form a b region. 3 disulfide bridges follow: cysteine 54/cysteine 96, cysteine 66/cysteine 109, and cysteine 95/cysteine 100. Residues 78–89 (GYGSSSRRAPQT) are c. Residues 90–110 (GIVDECCFRSCDLRRLEMYCA) form an a region. The interval 111–118 (PLKPAKSA) is d. The propeptide at 119–153 (RSVRAQRHTDMPKAQKEVHLKNASRGSAGNKNYRM) is e peptide. Positions 120–153 (SVRAQRHTDMPKAQKEVHLKNASRGSAGNKNYRM) are disordered. Over residues 125 to 138 (RHTDMPKAQKEVHL) the composition is skewed to basic and acidic residues. Positions 142–153 (SRGSAGNKNYRM) are enriched in polar residues.

Belongs to the insulin family. Forms a ternary complex with IGFR1 and ITGAV:ITGB3. Forms a ternary complex with IGFR1 and ITGA6:ITGB4. Forms a ternary complex with IGFBP3 and ALS.

Its subcellular location is the secreted. Its function is as follows. The insulin-like growth factors, isolated from plasma, are structurally and functionally related to insulin but have a much higher growth-promoting activity. May be a physiological regulator of [1-14C]-2-deoxy-D-glucose (2DG) transport and glycogen synthesis in osteoblasts. Stimulates glucose transport in bone-derived osteoblastic (PyMS) cells and is effective at much lower concentrations than insulin, not only regarding glycogen and DNA synthesis but also with regard to enhancing glucose uptake. May play a role in synapse maturation. Ca(2+)-dependent exocytosis of IGF1 is required for sensory perception of smell in the olfactory bulb. Acts as a ligand for IGF1R. Binds to the alpha subunit of IGF1R, leading to the activation of the intrinsic tyrosine kinase activity which autophosphorylates tyrosine residues in the beta subunit thus initiating a cascade of down-stream signaling events leading to activation of the PI3K-AKT/PKB and the Ras-MAPK pathways. Binds to integrins ITGAV:ITGB3 and ITGA6:ITGB4. Its binding to integrins and subsequent ternary complex formation with integrins and IGFR1 are essential for IGF1 signaling. Induces the phosphorylation and activation of IGFR1, MAPK3/ERK1, MAPK1/ERK2 and AKT1. As part of the MAPK/ERK signaling pathway, acts as a negative regulator of apoptosis in cardiomyocytes via promotion of STUB1/CHIP-mediated ubiquitination and degradation of ICER-type isoforms of CREM. The protein is Insulin-like growth factor 1 of Panthera tigris altaica (Siberian tiger).